The chain runs to 291 residues: uncharacterized protein (291 aa).

One can recognise a DAGKc domain in the interval 68-205 (PVAVSASFLW…VIQLWARPRG (138 aa)).

This is an uncharacterized protein from Mycobacterium tuberculosis (strain CDC 1551 / Oshkosh).